The sequence spans 621 residues: Chaperone protein HscA homolog (621 aa).

Belongs to the heat shock protein 70 family.

Its function is as follows. Chaperone involved in the maturation of iron-sulfur cluster-containing proteins. Has a low intrinsic ATPase activity which is markedly stimulated by HscB. This chain is Chaperone protein HscA homolog, found in Polynucleobacter necessarius subsp. necessarius (strain STIR1).